The primary structure comprises 326 residues: E3 ubiquitin-protein ligase SINAT3 (326 aa).

The tract at residues 1 to 44 (MDLDSMDCTSTMDVTDDEEIHQDRHSYASVSKHHHTNNNTTNVN) is disordered. The RING-type zinc-finger motif lies at 63-99 (CPVCTNSMYPPIHQCHNGHTLCSTCKARVHNRCPTCR). The interval 113 to 306 (VAESLELPCK…KELKLRVTGR (194 aa)) is SBD. The SIAH-type zinc-finger motif lies at 116-176 (SLELPCKHMS…LVAHLRDDHK (61 aa)). Zn(2+) is bound by residues cysteine 121, cysteine 128, histidine 140, cysteine 144, cysteine 151, cysteine 158, histidine 170, and histidine 175.

Belongs to the SINA (Seven in absentia) family. As to quaternary structure, interacts with SINAT6. Interacts with WAV3. Interacts with FREE1. Interacts with ELC/VPS23A.

It localises to the endosome. The protein localises to the multivesicular body. The protein resides in the cytoplasmic vesicle. Its subcellular location is the autophagosome. The catalysed reaction is S-ubiquitinyl-[E2 ubiquitin-conjugating enzyme]-L-cysteine + [acceptor protein]-L-lysine = [E2 ubiquitin-conjugating enzyme]-L-cysteine + N(6)-ubiquitinyl-[acceptor protein]-L-lysine.. Its pathway is protein modification; protein ubiquitination. E3 ubiquitin-protein ligase that mediates ubiquitination and subsequent proteasomal degradation of target proteins. E3 ubiquitin ligases accept ubiquitin from an E2 ubiquitin-conjugating enzyme in the form of a thioester and then directly transfers the ubiquitin to targeted substrates. It probably triggers the ubiquitin-mediated degradation of different substrates. Modulates directly the ubiquitination and proteasomal-dependent degradation of FREE1, a component of the ESCRT-I complex. Modulates directly the ubiquitination and proteasomal-dependent degradation of ELC/VPS23A, a component of the ESCRT-I complex. This is E3 ubiquitin-protein ligase SINAT3 from Arabidopsis thaliana (Mouse-ear cress).